The chain runs to 264 residues: 2-dehydro-3-deoxy-D-gluconate 5-dehydrogenase (264 aa).

Position 14 to 38 (14 to 38) interacts with NAD(+); the sequence is LVTGSTHGLGMAMAKGLGLAGATIV. Serine 147 contacts substrate. Tyrosine 160 functions as the Proton acceptor in the catalytic mechanism.

The protein belongs to the short-chain dehydrogenases/reductases (SDR) family. Homotetramer.

It localises to the cytoplasm. It catalyses the reaction 2-dehydro-3-deoxy-D-gluconate + NAD(+) = 3-deoxy-D-glycero-2,5-hexodiulosonate + NADH + H(+). 2-dehydro-3-deoxy-D-gluconate 5-dehydrogenase involved in ulvan degradation. Ulvan is the main polysaccharide component of the Ulvales (green seaweed) cell wall. It is composed of disaccharide building blocks comprising 3-sulfated rhamnose (Rha3S) linked to D-glucuronic acid (GlcA), L-iduronic acid (IduA), or D-xylose (Xyl). Catalyzes the reversible reduction of 2,5-diketo-3-deoxygluconate (DKII or 4,6-dihydroxy-2,5-dioxohexanoate) into 2-keto-3-deoxygluconate (KDG or 2-dehydro-3-deoxygluconate) with a concomitant oxidation of NADH. The polypeptide is 2-dehydro-3-deoxy-D-gluconate 5-dehydrogenase (kduD) (Formosa agariphila (strain DSM 15362 / KCTC 12365 / LMG 23005 / KMM 3901 / M-2Alg 35-1)).